The sequence spans 82 residues: Cytochrome b559 subunit alpha (82 aa).

Residues 22 to 36 (VIHAITLPSIFLAGF) traverse the membrane as a helical segment. His-24 contributes to the heme binding site.

The protein belongs to the PsbE/PsbF family. In terms of assembly, heterodimer of an alpha subunit and a beta subunit. PSII is composed of 1 copy each of membrane proteins PsbA, PsbB, PsbC, PsbD, PsbE, PsbF, PsbH, PsbI, PsbJ, PsbK, PsbL, PsbM, PsbT, PsbX, PsbY, PsbZ, Psb30/Ycf12, peripheral proteins PsbO, CyanoQ (PsbQ), PsbU, PsbV and a large number of cofactors. It forms dimeric complexes. Heme b serves as cofactor.

The protein resides in the cellular thylakoid membrane. Functionally, this b-type cytochrome is tightly associated with the reaction center of photosystem II (PSII). PSII is a light-driven water:plastoquinone oxidoreductase that uses light energy to abstract electrons from H(2)O, generating O(2) and a proton gradient subsequently used for ATP formation. It consists of a core antenna complex that captures photons, and an electron transfer chain that converts photonic excitation into a charge separation. This is Cytochrome b559 subunit alpha from Synechococcus sp. (strain CC9311).